Reading from the N-terminus, the 285-residue chain is Ribosomal RNA small subunit methyltransferase H (285 aa).

Residues 34 to 36 (AGH), aspartate 51, phenylalanine 75, aspartate 96, and histidine 103 contribute to the S-adenosyl-L-methionine site. Positions 258 to 285 (PLVPSEKEAAQNPRARSAKLRAAEKEAP) are disordered.

The protein belongs to the methyltransferase superfamily. RsmH family.

The protein localises to the cytoplasm. The catalysed reaction is cytidine(1402) in 16S rRNA + S-adenosyl-L-methionine = N(4)-methylcytidine(1402) in 16S rRNA + S-adenosyl-L-homocysteine + H(+). In terms of biological role, specifically methylates the N4 position of cytidine in position 1402 (C1402) of 16S rRNA. This is Ribosomal RNA small subunit methyltransferase H from Thermus thermophilus (strain ATCC BAA-163 / DSM 7039 / HB27).